The primary structure comprises 498 residues: Protein flp (498 aa).

The next 4 helical transmembrane spans lie at 6–26 (LYFL…IYIT), 389–409 (FNIV…FSAY), 433–453 (LTLC…YLIL), and 471–491 (LALI…LLFL).

The protein resides in the cell membrane. In terms of biological role, its precise function is unknown. Has no penicillin-binding activity and is not involved in methicillin resistance. This Staphylococcus aureus (strain Mu50 / ATCC 700699) protein is Protein flp (flp).